We begin with the raw amino-acid sequence, 452 residues long: tRNA modification GTPase MnmE (452 aa).

(6S)-5-formyl-5,6,7,8-tetrahydrofolate is bound by residues Arg21, Glu78, and Lys118. Residues 214-375 (GMKVVIAGRP…LREHLKKSMG (162 aa)) form the TrmE-type G domain. Residue Asn224 coordinates K(+). GTP is bound by residues 224-229 (NAGKSS), 243-249 (TNIAGTT), and 268-271 (DTAG). Ser228 is a binding site for Mg(2+). The K(+) site is built by Thr243, Ile245, and Thr248. Mg(2+) is bound at residue Thr249. Lys452 serves as a coordination point for (6S)-5-formyl-5,6,7,8-tetrahydrofolate.

It belongs to the TRAFAC class TrmE-Era-EngA-EngB-Septin-like GTPase superfamily. TrmE GTPase family. As to quaternary structure, homodimer. Heterotetramer of two MnmE and two MnmG subunits. K(+) serves as cofactor.

It localises to the cytoplasm. Functionally, exhibits a very high intrinsic GTPase hydrolysis rate. Involved in the addition of a carboxymethylaminomethyl (cmnm) group at the wobble position (U34) of certain tRNAs, forming tRNA-cmnm(5)s(2)U34. The sequence is that of tRNA modification GTPase MnmE from Actinobacillus pleuropneumoniae serotype 3 (strain JL03).